Consider the following 254-residue polypeptide: 5-oxoprolinase subunit A (254 aa).

Belongs to the LamB/PxpA family. As to quaternary structure, forms a complex composed of PxpA, PxpB and PxpC.

It carries out the reaction 5-oxo-L-proline + ATP + 2 H2O = L-glutamate + ADP + phosphate + H(+). Functionally, catalyzes the cleavage of 5-oxoproline to form L-glutamate coupled to the hydrolysis of ATP to ADP and inorganic phosphate. This Burkholderia mallei (strain NCTC 10247) protein is 5-oxoprolinase subunit A.